We begin with the raw amino-acid sequence, 439 residues long: Ribosomal protein uS12 methylthiotransferase RimO (439 aa).

One can recognise an MTTase N-terminal domain in the interval Pro4–Pro114. [4Fe-4S] cluster contacts are provided by Cys13, Cys49, Cys78, Cys147, Cys151, and Cys154. Positions Leu133–Ala370 constitute a Radical SAM core domain. In terms of domain architecture, TRAM spans Ser373–Ala439.

The protein belongs to the methylthiotransferase family. RimO subfamily. The cofactor is [4Fe-4S] cluster.

It localises to the cytoplasm. The catalysed reaction is L-aspartate(89)-[ribosomal protein uS12]-hydrogen + (sulfur carrier)-SH + AH2 + 2 S-adenosyl-L-methionine = 3-methylsulfanyl-L-aspartate(89)-[ribosomal protein uS12]-hydrogen + (sulfur carrier)-H + 5'-deoxyadenosine + L-methionine + A + S-adenosyl-L-homocysteine + 2 H(+). Functionally, catalyzes the methylthiolation of an aspartic acid residue of ribosomal protein uS12. The protein is Ribosomal protein uS12 methylthiotransferase RimO of Bordetella parapertussis (strain 12822 / ATCC BAA-587 / NCTC 13253).